Here is a 443-residue protein sequence, read N- to C-terminus: F-box only protein 39 (443 aa).

Residues 16–61 form the F-box domain; sequence WATLPDVCLRRVFWWLGDRDRSRAALVCRKWNQMMYSADLWRYRTI.

As to quaternary structure, directly interacts with SKP1 and CUL1.

In terms of biological role, substrate-recognition component of the SCF (SKP1-CUL1-F-box protein)-type E3 ubiquitin ligase complex. This chain is F-box only protein 39 (FBXO39), found in Bos taurus (Bovine).